A 213-amino-acid polypeptide reads, in one-letter code: Guanylate kinase (213 aa).

In terms of domain architecture, Guanylate kinase-like spans 12–190 (GLCLVVAAPS…AIDQVRTILH (179 aa)). 19–26 (APSGAGKS) contacts ATP.

Belongs to the guanylate kinase family.

The protein resides in the cytoplasm. The catalysed reaction is GMP + ATP = GDP + ADP. Functionally, essential for recycling GMP and indirectly, cGMP. The sequence is that of Guanylate kinase from Granulibacter bethesdensis (strain ATCC BAA-1260 / CGDNIH1).